The following is a 393-amino-acid chain: Epoxyqueuosine reductase (393 aa).

Aspartate 154 serves as the catalytic Proton donor. Residues 196–228 enclose the 4Fe-4S ferredoxin-type domain; that stretch reads LPLPVDIPVQEGCHSCVACITSCPTGAIVEPYT. [4Fe-4S] cluster-binding residues include cysteine 208, cysteine 211, cysteine 214, cysteine 218, cysteine 234, cysteine 261, cysteine 264, and cysteine 268.

It belongs to the QueG family. Monomer. Requires cob(II)alamin as cofactor. It depends on [4Fe-4S] cluster as a cofactor.

Its subcellular location is the cytoplasm. The enzyme catalyses epoxyqueuosine(34) in tRNA + AH2 = queuosine(34) in tRNA + A + H2O. Its pathway is tRNA modification; tRNA-queuosine biosynthesis. Functionally, catalyzes the conversion of epoxyqueuosine (oQ) to queuosine (Q), which is a hypermodified base found in the wobble positions of tRNA(Asp), tRNA(Asn), tRNA(His) and tRNA(Tyr). This Shewanella oneidensis (strain ATCC 700550 / JCM 31522 / CIP 106686 / LMG 19005 / NCIMB 14063 / MR-1) protein is Epoxyqueuosine reductase.